A 390-amino-acid polypeptide reads, in one-letter code: Sister chromatid cohesion protein DCC1 (390 aa).

It belongs to the DCC1 family. As to quaternary structure, component of the ctf18-RFC complex which consists of ctf18, ctf8, dscc1 and the RFC complex.

The protein resides in the nucleus. Its function is as follows. Loads pcna onto primed templates regulating velocity, spacing and restart activity of replication forks. May couple DNA replication to sister chromatid cohesion. The polypeptide is Sister chromatid cohesion protein DCC1 (dscc1) (Xenopus laevis (African clawed frog)).